Here is a 378-residue protein sequence, read N- to C-terminus: Tyrosinase-like protein phomQ1' (378 aa).

The chain crosses the membrane as a helical span at residues 42 to 62 (TIIVVSVITFAAIIGCWVFLS). 2 residues coordinate Cu cation: histidine 130 and histidine 139. Asparagine 209 carries an N-linked (GlcNAc...) asparagine glycan. Positions 279 and 305 each coordinate Cu cation.

This sequence belongs to the tyrosinase family. Requires Cu(2+) as cofactor.

The protein resides in the membrane. It functions in the pathway mycotoxin biosynthesis. In terms of biological role, tyrosinase-like protein; part of the gene cluster that mediates the biosynthesis of the phomopsins, a group of hexapeptide mycotoxins which infects lupins and causes lupinosis disease in livestock. The pathway starts with the processing of the precursor phomA' by several endopeptidases including kexin proteases as well as the cluster-specific S41 family peptidase phomP1 and the oligopeptidase phomG' to produce 10 identical copies of the hexapeptide Tyr-Val-Ile-Pro-Ile-Asp. After being excised from the precursor peptide, the core peptides are cyclized and modified post-translationally by enzymes encoded within the gene cluster. The timing and order of proteolysis of the phomA' precursor and PTMs are still unknown. Two tyrosinase-like enzymes, phomQ1' and phomQ2, catalyze the chlorination and hydroxylation of Tyr, respectively. PhomYb, is proposed to be involved in the construction of the macrocyclic structure. The other 4 ustYa family proteins may be involved in PTMs that generate the unique structure of phomopsin A. PhomYa' is required for the hydroxylation of C-beta of Tyr. PhomYc', phomYd', and phomYe are responsible for the biosynthesis of 2,3-dehydroisoleucine (dIle), 2,3-dehydroaspartic acid (dAsp), and 3,4-dehydroproline (dPro), respectively. While dIle formation by phomYc' is indispensable for the installation of dAsp by phomYd', the order of the other PTMs have not been elucidated yet. Most of the biosynthetic enzymes likely have broad substrate specificity, and thus, there might be a metabolic grid from a precursor to phomopsin A. The enzyme(s) responsible for the biosynthesis of 3,4-dehydrovaline (dVal) have also not been identified yet. Finally, phomM' acts as an S-adenosylmethionine-dependent alpha-N-methyltransferase that catalyzes two successive N-methylation reactions, converting N-desmethyl-phomopsin A to phomopsin A and phomopsin A further to an N,N-dimethylated congener called phomopsin E. This Diaporthe leptostromiformis (Lupinosis disease fungus) protein is Tyrosinase-like protein phomQ1'.